Reading from the N-terminus, the 89-residue chain is Small ribosomal subunit protein uS15 (89 aa).

Belongs to the universal ribosomal protein uS15 family. As to quaternary structure, part of the 30S ribosomal subunit. Forms a bridge to the 50S subunit in the 70S ribosome, contacting the 23S rRNA.

Functionally, one of the primary rRNA binding proteins, it binds directly to 16S rRNA where it helps nucleate assembly of the platform of the 30S subunit by binding and bridging several RNA helices of the 16S rRNA. Its function is as follows. Forms an intersubunit bridge (bridge B4) with the 23S rRNA of the 50S subunit in the ribosome. The polypeptide is Small ribosomal subunit protein uS15 (Shewanella halifaxensis (strain HAW-EB4)).